We begin with the raw amino-acid sequence, 41 residues long: Large ribosomal subunit protein bL36B (41 aa).

This sequence belongs to the bacterial ribosomal protein bL36 family.

In Neisseria meningitidis serogroup C (strain 053442), this protein is Large ribosomal subunit protein bL36B.